The sequence spans 679 residues: Patatin-like phospholipase 1 (679 aa).

Disordered stretches follow at residues phenylalanine 19–asparagine 45 and glycine 155–serine 194. Composition is skewed to polar residues over residues tyrosine 35–asparagine 45 and threonine 162–glycine 176. The span at serine 177–glutamate 188 shows a compositional bias: basic and acidic residues. The PNPLA domain occupies leucine 338–leucine 544. The short motif at glycine 381–glycine 385 is the GXSXG element. Serine 383 acts as the Nucleophile in catalysis. Residue aspartate 531 is the Proton acceptor of the active site. Positions aspartate 531–alanine 533 match the DGA/G motif.

The protein belongs to the patatin family.

Its subcellular location is the cytoplasm. The enzyme catalyses a 1,2-diacyl-sn-glycero-3-phosphocholine + H2O = a 1-acyl-sn-glycero-3-phosphocholine + a fatty acid + H(+). It carries out the reaction 1,2-dihexadecanoyl-sn-glycero-3-phosphocholine + H2O = 1-hexadecanoyl-sn-glycero-3-phosphocholine + hexadecanoate + H(+). Functionally, hydrolyzes the ester bond of the fatty acyl group attached at the sn-2 position of phospholipids such as phosphatidylcholine. Involved in gametogenesis; however, it is not clear whether it is involved in gametocytes development in host erythrocytes or in gametocyte activation in the mosquito midgut. Involved in gametocyte development in host erythrocytes; however, not involved in gametocytes activation including male gamete exflagellation. Involved in the rounding up of gametocytes following activation in the mosquito midgut; however, not required for gametocyte development in host erythrocytes. Required for exflagellation of activated male gametocytes. Involved in gametocytes egress from host erythrocytes by promoting the relocalization of perforin-like protein PLP2-containing vesicles to the periphery of gametocytes; PLP2 secretion is required for permeabilization of the erythrocyte membrane and thus, promotes gametocyte egress. Dispensable for asexual blood stage development. This Plasmodium falciparum (isolate NF54) protein is Patatin-like phospholipase 1.